The primary structure comprises 139 residues: MSSQPSKALETFDNPTPGRDFHIHMEIPEFTCLCPKTGQPDFAVLYLDYIPDQKCVELKSLKLYIWSFRDEGCFHEAVTNQILDDLVVATDPKFMRLTAKFYVRGGIFTNVVAEHRKPGWQPQPRVELAEFESQSNIRG.

The active-site Thioimide intermediate is Cys-34. Asp-41 acts as the Proton donor in catalysis. Substrate contacts are provided by residues 56–58 (VEL) and 75–76 (HE).

This sequence belongs to the GTP cyclohydrolase I family. QueF type 1 subfamily.

It is found in the cytoplasm. It catalyses the reaction 7-aminomethyl-7-carbaguanine + 2 NADP(+) = 7-cyano-7-deazaguanine + 2 NADPH + 3 H(+). The protein operates within tRNA modification; tRNA-queuosine biosynthesis. In terms of biological role, catalyzes the NADPH-dependent reduction of 7-cyano-7-deazaguanine (preQ0) to 7-aminomethyl-7-deazaguanine (preQ1). The chain is NADPH-dependent 7-cyano-7-deazaguanine reductase from Methylobacillus flagellatus (strain ATCC 51484 / DSM 6875 / VKM B-1610 / KT).